Here is a 309-residue protein sequence, read N- to C-terminus: Probable L,D-transpeptidase ErfK/SrfK (309 aa).

A signal peptide spans Met-1 to Ala-21. Positions Glu-96–Ile-231 constitute a L,D-TPase catalytic domain. The Proton donor/acceptor role is filled by His-191. Cys-207 acts as the Nucleophile in catalysis.

Belongs to the YkuD family.

The protein localises to the periplasm. The protein operates within cell wall biogenesis; peptidoglycan biosynthesis. In Salmonella typhimurium (strain LT2 / SGSC1412 / ATCC 700720), this protein is Probable L,D-transpeptidase ErfK/SrfK (erfK).